A 401-amino-acid chain; its full sequence is MSQKLVLILNCGSSSLKFSILDPQTGEEKLSGLAEAFHLDDARIKWKLHGEKGNADLGAGAAHSEALNFIVNSIFPLDPSLKEDIVAIGHRIVHGGEKFTSSVVITDEVVQGIKDAVQFAPLHNPAHLIGIEEAFKMFPHLKDKNVAVFDTAFHQTMPEEAYLYALPYSLYREHGVRRYGAHGTSHFFVSQQAAERLNVPAEQVNVITCHLGNGASIAAVRHGQCIDTSMGLTPLEGLVMGTRSGDIDPAIVFYLHDNLGLSVEEINTLLTKKSGLLGLTEVTSDCRYAEDNYDKEASAKRALDVFSYRLAKYIGSYMAVIGERLDAIVFTGGIGENSSLVRELTLNHLKLFGYQVDSDKNKAARFGHEGVITADNTPVAMVIPTNEELVIAQDTARLCIA.

Asn10 serves as a coordination point for Mg(2+). Lys17 is an ATP binding site. Arg91 is a binding site for substrate. Residue Asp150 is the Proton donor/acceptor of the active site. Residues 210 to 214, 285 to 287, and 333 to 337 contribute to the ATP site; these read HLGNG, DCR, and GIGEN. A Mg(2+)-binding site is contributed by Glu387.

The protein belongs to the acetokinase family. As to quaternary structure, homodimer. Mg(2+) is required as a cofactor. It depends on Mn(2+) as a cofactor.

It localises to the cytoplasm. It carries out the reaction acetate + ATP = acetyl phosphate + ADP. The protein operates within metabolic intermediate biosynthesis; acetyl-CoA biosynthesis; acetyl-CoA from acetate: step 1/2. Its function is as follows. Catalyzes the formation of acetyl phosphate from acetate and ATP. Can also catalyze the reverse reaction. The protein is Acetate kinase of Pasteurella multocida (strain Pm70).